The chain runs to 43 residues: Protein PsbN (43 aa).

The chain crosses the membrane as a helical span at residues 5 to 27 (TLVTIFISGSLVSFTGYALYTAF).

The protein belongs to the PsbN family.

The protein resides in the plastid. Its subcellular location is the chloroplast thylakoid membrane. Functionally, may play a role in photosystem I and II biogenesis. The polypeptide is Protein PsbN (Piper cenocladum (Ant piper)).